Reading from the N-terminus, the 158-residue chain is Transcription elongation factor GreA (158 aa).

Residues 5-75 (EKLPMLAEGY…DLEDRVSRAQ (71 aa)) are a coiled coil.

The protein belongs to the GreA/GreB family.

Necessary for efficient RNA polymerase transcription elongation past template-encoded arresting sites. The arresting sites in DNA have the property of trapping a certain fraction of elongating RNA polymerases that pass through, resulting in locked ternary complexes. Cleavage of the nascent transcript by cleavage factors such as GreA or GreB allows the resumption of elongation from the new 3'terminus. GreA releases sequences of 2 to 3 nucleotides. The sequence is that of Transcription elongation factor GreA from Novosphingobium aromaticivorans (strain ATCC 700278 / DSM 12444 / CCUG 56034 / CIP 105152 / NBRC 16084 / F199).